A 655-amino-acid polypeptide reads, in one-letter code: Epithelial sodium channel subunit gamma (655 aa).

Over 1 to 55 (MAPGEKIKAKIKKNLPVRGPQAPTIKDLMHWYCLNTNTHGCRRIVVSRGRLRRLL) the chain is Cytoplasmic. The chain crosses the membrane as a helical span at residues 56 to 76 (WIAFTLTAVALIIWQCALLVF). At 77–547 (SFYTVSVSIK…GGQLGLWMSC (471 aa)) the chain is on the extracellular side. Disulfide bonds link Cys-100-Cys-289, Cys-213-Cys-220, Cys-266-Cys-273, Cys-378-Cys-463, Cys-400-Cys-459, Cys-404-Cys-455, Cys-413-Cys-440, and Cys-415-Cys-429. A gating release of inhibition by proteolysis (GRIP); protease-sensitive region that is responsible for the proteolytic activation of the channel region spans residues 140 to 227 (RKRREAGSMR…SDCATYTFSS (88 aa)). An N-linked (GlcNAc...) asparagine glycan is attached at Asn-215. An N-linked (GlcNAc...) asparagine glycan is attached at Asn-277. Asn-503 carries an N-linked (GlcNAc...) asparagine glycan. The helical transmembrane segment at 548–568 (SVVCVIEIIEVFFIDFFSIIA) threads the bilayer. At 569–655 (RRQWQKAKDW…LTDTQLTNEF (87 aa)) the chain is on the cytoplasmic side. Positions 582-636 (RRTPPSTETPSSQQGQDNPALDTDDDLPTFTSAMRLPPAPEAPVPGTPPPRYNTL) are disordered. A compositionally biased stretch (polar residues) spans 585–598 (PPSTETPSSQQGQD). The span at 618-632 (PPAPEAPVPGTPPPR) shows a compositional bias: pro residues. Residues 629–633 (PPPRY) carry the PY motif; recruits WW domain-containing proteins and is thereby required for ubiquitination and inhibition of the channel by NEDD4 and NEDD4L motif.

The protein belongs to the amiloride-sensitive sodium channel (TC 1.A.6) family. SCNN1G subfamily. In terms of assembly, component of the heterotrimeric epithelial sodium channel (ENaC) composed of an alpha/SCNN1A, a beta/SCNN1B and a gamma/SCNN1G subunit. Interacts with WWP1 (via WW domains). Interacts with WWP2 (via WW domains); inhibits the channel. Interacts with the full-length immature form of PCSK9 (pro-PCSK9); inhibits ENaC by promoting its proteasomal degradation. Interacts with BPIFA1; the interaction is indirect via SCNN1B and inhibits the proteolytic maturation of SCNN1A and SCNN1G and the activation of ENaC. Phosphorylated on serine and threonine residues. Aldosterone and insulin increase the basal level of phosphorylation. In terms of processing, ubiquitinated. Can be ubiquitinated at multiple sites and undergo monoubiquitination and polyubiquitination. Ubiquitination by NEDD4 or NEDD4L inhibits the ENaC channel through endocytosis, intracellular retention and degradation of its individual subunits. Post-translationally, ENaC is activated through the proteolytic maturation of its subunits. Furin cleaves the SCNN1G subunit first, followed by cleavage by prostasin (PRSS8), which results in a stepwise increase in the open probability of the channel due to the release of an inhibitory tract. BPIFA1, which is recruited by the SCNN1B subunit, prevents the proteolytic activation of ENaC. N-glycosylated. N-linked glycans are processed to complex type during ENaC complex assembly and transport to the plasma membrane. In terms of tissue distribution, lung and kidney.

Its subcellular location is the apical cell membrane. The catalysed reaction is Na(+)(in) = Na(+)(out). Its activity is regulated as follows. Originally identified and characterized by its inhibition by the diuretic drug amiloride. Functionally, this is one of the three pore-forming subunits of the heterotrimeric epithelial sodium channel (ENaC), a critical regulator of sodium balance and fluid homeostasis. ENaC operates in epithelial tissues, where it mediates the electrodiffusion of sodium ions from extracellular fluid through the apical membrane of cells, with water following osmotically. It plays a key role in maintaining sodium homeostasis through electrogenic sodium reabsorption in the kidneys. Additionally, ENaC is essential for airway surface liquid homeostasis, which is crucial for proper mucus clearance. The sequence is that of Epithelial sodium channel subunit gamma from Mus musculus (Mouse).